The chain runs to 448 residues: uncharacterized protein (448 aa).

Over residues 428-440 (PFKTDCDPNNDND) the composition is skewed to polar residues. Residues 428-448 (PFKTDCDPNNDNDLTPPAVFG) are disordered.

This is an uncharacterized protein from Mycoplasma pneumoniae (strain ATCC 29342 / M129 / Subtype 1) (Mycoplasmoides pneumoniae).